Reading from the N-terminus, the 161-residue chain is Early E3 17.7 kDa glycoprotein (161 aa).

Asn14 and Asn87 each carry an N-linked (GlcNAc...) asparagine; by host glycan. A helical transmembrane segment spans residues Ile102 to Asn129.

It localises to the host membrane. The chain is Early E3 17.7 kDa glycoprotein from Murine adenovirus A serotype 1 (MAdV-1).